The chain runs to 462 residues: Chromosomal replication initiator protein DnaA (462 aa).

Positions 1-83 (MSLSLWQQCL…LRFEVGSKPA (83 aa)) are domain I, interacts with DnaA modulators. Positions 83-125 (AARAHNNPVTASVSAPVAPVTRSAPMRPSWDNSPAQPELSYRS) are domain II. Residues 104 to 125 (RSAPMRPSWDNSPAQPELSYRS) form a disordered region. Polar residues predominate over residues 112–125 (WDNSPAQPELSYRS). The tract at residues 126 to 342 (NVNPKHTFDN…GALNRVIANA (217 aa)) is domain III, AAA+ region. Residues Gly170, Gly172, Lys173, and Thr174 each coordinate ATP. The tract at residues 343 to 462 (NFTGRAITID…FSNLIRTLSS (120 aa)) is domain IV, binds dsDNA.

Belongs to the DnaA family. As to quaternary structure, oligomerizes as a right-handed, spiral filament on DNA at oriC.

The protein localises to the cytoplasm. In terms of biological role, plays an essential role in the initiation and regulation of chromosomal replication. ATP-DnaA binds to the origin of replication (oriC) to initiate formation of the DNA replication initiation complex once per cell cycle. Binds the DnaA box (a 9 base pair repeat at the origin) and separates the double-stranded (ds)DNA. Forms a right-handed helical filament on oriC DNA; dsDNA binds to the exterior of the filament while single-stranded (ss)DNA is stabiized in the filament's interior. The ATP-DnaA-oriC complex binds and stabilizes one strand of the AT-rich DNA unwinding element (DUE), permitting loading of DNA polymerase. After initiation quickly degrades to an ADP-DnaA complex that is not apt for DNA replication. Binds acidic phospholipids. The sequence is that of Chromosomal replication initiator protein DnaA from Yersinia pseudotuberculosis serotype O:1b (strain IP 31758).